We begin with the raw amino-acid sequence, 276 residues long: Protein canopy homolog 3 (276 aa).

The N-terminal stretch at 1–16 (MNVFISVVLFLGSARA) is a signal peptide. The region spanning 30 to 269 (NKCEVCKFVS…EEEIQKKVPL (240 aa)) is the Saposin B-type domain. Disulfide bonds link Cys32–Cys190, Cys35–Cys178, and Cys88–Cys150. A coiled-coil region spans residues 137–162 (NETSAEVADLKKQCDVMVEQYEDVIE). The tract at residues 206–276 (AEDKKKKKGK…VPLNQPKTEL (71 aa)) is disordered. 2 stretches are compositionally biased toward basic residues: residues 210 to 219 (KKKKGKKKKG) and 228 to 239 (KEKKVKKKKKKS). Positions 240–252 (KISDSESSKRRME) are enriched in basic and acidic residues.

The protein belongs to the canopy family.

The protein resides in the endoplasmic reticulum. Functionally, toll-like receptor (TLR)-specific co-chaperone for HSP90B1. Required for proper TLR folding and hence controls TLR exit from the endoplasmic reticulum. Consequently, required for immune responses. This chain is Protein canopy homolog 3 (cnpy3), found in Danio rerio (Zebrafish).